The following is a 124-amino-acid chain: Large ribosomal subunit protein eL22z (124 aa).

The protein belongs to the eukaryotic ribosomal protein eL22 family.

This chain is Large ribosomal subunit protein eL22z (RPL22B), found in Arabidopsis thaliana (Mouse-ear cress).